The primary structure comprises 397 residues: CCA-adding enzyme (397 aa).

ATP-binding residues include glycine 26 and arginine 29. Residues glycine 26 and arginine 29 each coordinate CTP. Positions 39 and 41 each coordinate Mg(2+). Residues arginine 110, aspartate 153, arginine 156, arginine 159, and arginine 162 each coordinate ATP. Residues arginine 110, aspartate 153, arginine 156, arginine 159, and arginine 162 each coordinate CTP.

The protein belongs to the tRNA nucleotidyltransferase/poly(A) polymerase family. Bacterial CCA-adding enzyme type 3 subfamily. As to quaternary structure, homodimer. Mg(2+) serves as cofactor.

The catalysed reaction is a tRNA precursor + 2 CTP + ATP = a tRNA with a 3' CCA end + 3 diphosphate. It carries out the reaction a tRNA with a 3' CCA end + 2 CTP + ATP = a tRNA with a 3' CCACCA end + 3 diphosphate. Its function is as follows. Catalyzes the addition and repair of the essential 3'-terminal CCA sequence in tRNAs without using a nucleic acid template. Adds these three nucleotides in the order of C, C, and A to the tRNA nucleotide-73, using CTP and ATP as substrates and producing inorganic pyrophosphate. tRNA 3'-terminal CCA addition is required both for tRNA processing and repair. Also involved in tRNA surveillance by mediating tandem CCA addition to generate a CCACCA at the 3' terminus of unstable tRNAs. While stable tRNAs receive only 3'-terminal CCA, unstable tRNAs are marked with CCACCA and rapidly degraded. In Bacillus cereus (strain ATCC 10987 / NRS 248), this protein is CCA-adding enzyme.